Here is a 617-residue protein sequence, read N- to C-terminus: Prothrombin (617 aa).

An N-terminal signal peptide occupies residues 1-24 (MLHVRGLGLPGCLALAALASLVHS). Residues 25–43 (QHVFLAPQQALSLLQRVRR) constitute a propeptide that is removed on maturation. The 47-residue stretch at 44–90 (ANSGFLEELRKGNLERECVEEQCSYEEAFEALESPQDTDVFWAKYTV) folds into the Gla domain. 10 positions are modified to 4-carboxyglutamate: Glu50, Glu51, Glu58, Glu60, Glu63, Glu64, Glu69, Glu70, Glu73, and Glu76. Cys61 and Cys66 are disulfide-bonded. Disulfide bonds link Cys91–Cys104, Cys109–Cys187, Cys130–Cys170, Cys158–Cys182, Cys215–Cys292, Cys236–Cys276, Cys264–Cys287, Cys332–Cys478, Cys387–Cys403, and Cys532–Cys546. 2 Kringle domains span residues 109 to 187 (CAMD…IPVC) and 215 to 292 (CLLE…LNYC). 2 N-linked (GlcNAc...) asparagine glycosylation sites follow: Asn120 and Asn144. Residues 360 to 614 (IVEGWDAEKG…LKRWMQKVID (255 aa)) enclose the Peptidase S1 domain. Catalysis depends on His402, which acts as the Charge relay system. Asn412 carries N-linked (GlcNAc...) asparagine glycosylation. The Charge relay system role is filled by Asp458. A high affinity receptor-binding region which is also known as the TP508 peptide region spans residues 547-569 (AGFKVNDTKRGDACEGDSGGPFV). N-linked (GlcNAc...) asparagine glycosylation is present at Asn552. Cys560 and Cys590 form a disulfide bridge. The Charge relay system role is filled by Ser564.

The protein belongs to the peptidase S1 family. In terms of assembly, heterodimer (named alpha-thrombin) of a light and a heavy chain; disulfide-linked. Forms a heterodimer with SERPINA5. In plasma, interacts (via N-terminus) with alpha-1-microglobulin; this interaction does not prevent the activation of prothrombin to thrombin. The gamma-carboxyglutamyl residues, which bind calcium ions, result from the carboxylation of glutamyl residues by a microsomal enzyme, the vitamin K-dependent carboxylase. The modified residues are necessary for the calcium-dependent interaction with a negatively charged phospholipid surface, which is essential for the conversion of prothrombin to thrombin. In terms of processing, in the penultimate step of the coagulation cascade, prothrombin is converted to thrombin by the prothrombinase complex composed of factor Xa (F10), cofactor Va (F5), and phospholipids. This activation requires factor Xa-catalyzed sequential cleavage at 2 sites, Arg-310 and Arg-359, along 2 possible pathways. In the first pathway, the first cleavage occurs at Arg-310, leading to the formation of the inactive intermediate prethrombin-2. This pathway preferentially occurs on platelets and in the absence of cofactor Va. In the second pathway, the first cleavage occurs at Arg-359, which separates protease domain into 2 chains that remain connected through a disulfide bond and generates the active intermediate meizothrombin. The presence of cofactor Va directs activation along the meizothrombin pathway and greatly accelerates the rate of cleavage at Arg-359, but has a smaller effect on the cleavage of meizothrombin at Arg-310. Meizothrombin accumulates as an intermediate when prothrombinase is assembled on the membrane of red blood cells.

The enzyme catalyses Selective cleavage of Arg-|-Gly bonds in fibrinogen to form fibrin and release fibrinopeptides A and B.. Its activity is regulated as follows. Activity is promoted in the presence of negatively charged surfaces, such as polyphosphate and dextran sulfate. Inhibited by SERPINA5. In terms of biological role, thrombin, which cleaves bonds after Arg and Lys, converts fibrinogen to fibrin and activates factors V, VII, VIII, XIII, and, in complex with thrombomodulin, protein C. Functions in blood homeostasis, inflammation and wound healing. Activates coagulation factor XI (F11); activation is promoted by the contact with negatively charged surfaces. Triggers the production of pro-inflammatory cytokines, such as MCP-1/CCL2 and IL8/CXCL8, in endothelial cells. The sequence is that of Prothrombin (F2) from Rattus norvegicus (Rat).